The following is a 188-amino-acid chain: V-type proton ATPase subunit E (188 aa).

The protein belongs to the V-ATPase E subunit family.

Its function is as follows. Produces ATP from ADP in the presence of a proton gradient across the membrane. This chain is V-type proton ATPase subunit E, found in Dictyoglomus turgidum (strain DSM 6724 / Z-1310).